Here is a 323-residue protein sequence, read N- to C-terminus: DNA-directed RNA polymerase subunit alpha (323 aa).

The interval 1-233 (MGQEKVTVST…DLFIPFFHAE (233 aa)) is alpha N-terminal domain (alpha-NTD). Positions 264–323 (IALKYIYIDQSELPPRVYNCLKRSNINTFLELLNNSQEELMKIQDFRIEDVKHILDVLEI) are alpha C-terminal domain (alpha-CTD).

The protein belongs to the RNA polymerase alpha chain family. In plastids the minimal PEP RNA polymerase catalytic core is composed of four subunits: alpha, beta, beta', and beta''. When a (nuclear-encoded) sigma factor is associated with the core the holoenzyme is formed, which can initiate transcription.

It localises to the plastid. The protein resides in the chloroplast. The enzyme catalyses RNA(n) + a ribonucleoside 5'-triphosphate = RNA(n+1) + diphosphate. In terms of biological role, DNA-dependent RNA polymerase catalyzes the transcription of DNA into RNA using the four ribonucleoside triphosphates as substrates. This Morus indica (Mulberry) protein is DNA-directed RNA polymerase subunit alpha.